The primary structure comprises 636 residues: Transcriptional repressor CTCFL (636 aa).

Disordered stretches follow at residues 17–38 (KEQK…VQRV), 160–195 (ENPE…DKRE), and 222–257 (LEEQ…PQSF). Over residues 160–170 (ENPELTPDLDE) the composition is skewed to acidic residues. Residues 242 to 251 (AKPKRRRQTK) are compositionally biased toward basic residues. C2H2-type zinc fingers lie at residues 257–279 (FQCD…IKIH), 285–307 (HLCH…VNTH), 313–336 (HKCR…RYKH), 342–364 (FKCS…IRSH), 370–392 (FQCC…MRTH), 398–421 (YECP…AQKH), 428–451 (YECP…RNLH), 458–480 (MKCR…QRTH), 486–508 (FKCK…MRMH), 514–537 (FSCL…RKYH), and 546–572 (HLCL…DPEH). The tract at residues 562-624 (QRHRKKCDPE…AAGSQSPDHG (63 aa)) is disordered. Positions 568 to 583 (CDPEHETLAPNKDRRP) are enriched in basic and acidic residues.

This sequence belongs to the CTCF zinc-finger protein family. Interacts with histones, PRMT7 and SETD1A. Interacts (via N-terminus) with BAG6/BAT3. As to expression, testis-specific.

It is found in the cytoplasm. The protein resides in the nucleus. Its function is as follows. Testis-specific DNA binding protein responsible for insulator function, nuclear architecture and transcriptional control, which probably acts by recruiting epigenetic chromatin modifiers. Plays a key role in gene imprinting in male germline, by participating in the establishment of differential methylation at the IGF2/H19 imprinted control region (ICR). Directly binds the unmethylated H19 ICR and recruits the PRMT7 methyltransferase, leading to methylate histone H4 'Arg-3' to form H4R3sme2. This probably leads to recruit de novo DNA methyltransferases at these sites. Seems to act as tumor suppressor. In association with DNMT1 and DNMT3B, involved in activation of BAG1 gene expression by binding to its promoter. Required for dimethylation of H3 lysine 4 (H3K4me2) of MYC and BRCA1 promoters. The sequence is that of Transcriptional repressor CTCFL (Ctcfl) from Mus musculus (Mouse).